Here is a 487-residue protein sequence, read N- to C-terminus: Cysteine--tRNA ligase (487 aa).

Cys-27 is a binding site for Zn(2+). Positions 29-39 (VTVYDLCHIGH) match the 'HIGH' region motif. Zn(2+) contacts are provided by Cys-211, His-236, and Glu-240. A 'KMSKS' region motif is present at residues 268 to 272 (KMSKS). Residue Lys-271 participates in ATP binding.

The protein belongs to the class-I aminoacyl-tRNA synthetase family. In terms of assembly, monomer. Requires Zn(2+) as cofactor.

It is found in the cytoplasm. The enzyme catalyses tRNA(Cys) + L-cysteine + ATP = L-cysteinyl-tRNA(Cys) + AMP + diphosphate. This Thermodesulfovibrio yellowstonii (strain ATCC 51303 / DSM 11347 / YP87) protein is Cysteine--tRNA ligase.